We begin with the raw amino-acid sequence, 548 residues long: Chaperonin GroEL (548 aa).

ATP contacts are provided by residues 30-33 (TLGP), K51, 87-91 (DGTTT), G415, and 479-481 (NAV).

Belongs to the chaperonin (HSP60) family. As to quaternary structure, forms a cylinder of 14 subunits composed of two heptameric rings stacked back-to-back. Interacts with the co-chaperonin GroES.

The protein resides in the cytoplasm. It carries out the reaction ATP + H2O + a folded polypeptide = ADP + phosphate + an unfolded polypeptide.. In terms of biological role, together with its co-chaperonin GroES, plays an essential role in assisting protein folding. The GroEL-GroES system forms a nano-cage that allows encapsulation of the non-native substrate proteins and provides a physical environment optimized to promote and accelerate protein folding. This chain is Chaperonin GroEL, found in Stenotrophomonas maltophilia (Pseudomonas maltophilia).